Here is a 428-residue protein sequence, read N- to C-terminus: GTPase Obg (428 aa).

Residues 1–158 enclose the Obg domain; it reads MFVDQTKIDV…RTLRLELKVL (158 aa). The OBG-type G domain maps to 159-328; the sequence is ADVGLVGFPS…LMGKTADLVE (170 aa). GTP contacts are provided by residues 165–172, 190–194, 212–215, 282–285, and 309–311; these read GFPSVGKS, FTTLT, DLPG, TQMD, and SSV. Mg(2+)-binding residues include Ser-172 and Thr-192. The 79-residue stretch at 350–428 folds into the OCT domain; the sequence is YKKPEDEGFK…IADFTFEFVD (79 aa).

Belongs to the TRAFAC class OBG-HflX-like GTPase superfamily. OBG GTPase family. As to quaternary structure, monomer. It depends on Mg(2+) as a cofactor.

It localises to the cytoplasm. In terms of biological role, an essential GTPase which binds GTP, GDP and possibly (p)ppGpp with moderate affinity, with high nucleotide exchange rates and a fairly low GTP hydrolysis rate. Plays a role in control of the cell cycle, stress response, ribosome biogenesis and in those bacteria that undergo differentiation, in morphogenesis control. In Lactobacillus johnsonii (strain CNCM I-12250 / La1 / NCC 533), this protein is GTPase Obg.